We begin with the raw amino-acid sequence, 230 residues long: MYDIKKWRHIFKLDPAKHISDDDLDAICMSQTDAIMIGGTDDVTEDNVIHLMSRVRRYPLPLVLEISNIESVMPGFDFYFVPTVLNSTDVVFHNGTLLEALKTYGHSIDFEEVIFEGYVVCNADSKMAKHTKANTDLTTEDLEAYAQMVNHMYRLPVMYIEYSGIYGDVSKVQAVSEHLTETQLFYGGGISSEQQATEMAAIADTIIVGDIIYKDIKKALKTVKIKESSK.

Lys12 lines the sn-glycerol 1-phosphate pocket. Residues Asp14 and Thr40 each coordinate Mg(2+). Sn-glycerol 1-phosphate-binding positions include 159–164 (YIEYSG), Gly189, and 209–210 (GD).

Belongs to the GGGP/HepGP synthase family. Group I subfamily. In terms of assembly, homodimer. Mg(2+) is required as a cofactor.

It catalyses the reaction sn-glycerol 1-phosphate + all-trans-heptaprenyl diphosphate = 3-heptaprenyl-sn-glycero-1-phosphate + diphosphate. The protein operates within membrane lipid metabolism; glycerophospholipid metabolism. Its function is as follows. Prenyltransferase that catalyzes in vivo the transfer of the heptaprenyl moiety of heptaprenyl pyrophosphate (HepPP; 35 carbon atoms) to the C3 hydroxyl of sn-glycerol-1-phosphate (G1P), producing heptaprenylglyceryl phosphate (HepGP). This reaction is an ether-bond-formation step in the biosynthesis of archaea-type G1P-based membrane lipids found in Bacillales. This Staphylococcus aureus (strain USA300) protein is Heptaprenylglyceryl phosphate synthase.